The following is a 527-amino-acid chain: Catalase (527 aa).

Positions 1–22 (MADNRDPASDQMKHWKEQRAAQ) are enriched in basic and acidic residues. Residues 1–42 (MADNRDPASDQMKHWKEQRAAQKPDVLTTGGGNPVGDKLNSL) are disordered. Alanine 2 carries the blocked amino end (Ala); alternate modification. N-acetylalanine; alternate is present on alanine 2. Serine 9 bears the Phosphoserine mark. Position 13 is an N6-succinyllysine (lysine 13). Catalysis depends on residues histidine 75 and asparagine 148. Residues histidine 194, phenylalanine 198, serine 201, arginine 203, asparagine 213, and tyrosine 215 each coordinate NADP(+). Lysine 221 carries the post-translational modification N6-succinyllysine. Lysine 233 carries the N6-acetyllysine modification. NADP(+) contacts are provided by lysine 237, tryptophan 303, and histidine 305. A heme-binding site is contributed by tyrosine 358. Phosphoserine is present on residues serine 417 and serine 434. Residues glutamine 442, threonine 445, and phenylalanine 446 each coordinate NADP(+). N6-acetyllysine; alternate occurs at positions 449 and 480. An N6-succinyllysine; alternate mark is found at lysine 449 and lysine 480. The residue at position 499 (lysine 499) is an N6-acetyllysine. Threonine 511 carries the phosphothreonine modification. The residue at position 517 (serine 517) is a Phosphoserine. Positions 524–527 (KANL) match the Microbody targeting signal; atypical motif.

The protein belongs to the catalase family. Homotetramer. Interacts (via microbody targeting signal) with PEX5, monomeric form interacts with PEX5, leading to its translocation into peroxisomes. Requires heme as cofactor. The cofactor is NADP(+).

It localises to the peroxisome matrix. The catalysed reaction is 2 H2O2 = O2 + 2 H2O. In terms of biological role, catalyzes the degradation of hydrogen peroxide (H(2)O(2)) generated by peroxisomal oxidases to water and oxygen, thereby protecting cells from the toxic effects of hydrogen peroxide. Promotes growth of cells including T-cells, B-cells, myeloid leukemia cells, melanoma cells, mastocytoma cells and normal and transformed fibroblast cells. In Bos taurus (Bovine), this protein is Catalase (CAT).